Here is a 192-residue protein sequence, read N- to C-terminus: Small ribosomal subunit protein uS4c-2 (192 aa).

Residues Thr91–Tyr155 enclose the S4 RNA-binding domain.

This sequence belongs to the universal ribosomal protein uS4 family. In terms of assembly, part of the 30S ribosomal subunit. Contacts protein S5. The interaction surface between S4 and S5 is involved in control of translational fidelity.

It localises to the plastid. Its subcellular location is the chloroplast. Functionally, one of the primary rRNA binding proteins, it binds directly to 16S rRNA where it nucleates assembly of the body of the 30S subunit. With S5 and S12 plays an important role in translational accuracy. The protein is Small ribosomal subunit protein uS4c-2 of Cyanidium caldarium (Red alga).